Consider the following 405-residue polypeptide: L-rhamnonate dehydratase (405 aa).

Substrate-binding residues include H33 and R59. D226, E252, and E280 together coordinate Mg(2+). The Proton acceptor role is filled by H329. E349 contributes to the substrate binding site.

This sequence belongs to the mandelate racemase/muconate lactonizing enzyme family. RhamD subfamily. Homooctamer; tetramer of dimers. Mg(2+) is required as a cofactor.

It catalyses the reaction L-rhamnonate = 2-dehydro-3-deoxy-L-rhamnonate + H2O. Its function is as follows. Catalyzes the dehydration of L-rhamnonate to 2-keto-3-deoxy-L-rhamnonate (KDR). This Escherichia coli O9:H4 (strain HS) protein is L-rhamnonate dehydratase.